The primary structure comprises 430 residues: tRNA(Ile)-lysidine synthase (430 aa).

24–29 (SGGLDS) lines the ATP pocket.

This sequence belongs to the tRNA(Ile)-lysidine synthase family.

It is found in the cytoplasm. It catalyses the reaction cytidine(34) in tRNA(Ile2) + L-lysine + ATP = lysidine(34) in tRNA(Ile2) + AMP + diphosphate + H(+). Its function is as follows. Ligates lysine onto the cytidine present at position 34 of the AUA codon-specific tRNA(Ile) that contains the anticodon CAU, in an ATP-dependent manner. Cytidine is converted to lysidine, thus changing the amino acid specificity of the tRNA from methionine to isoleucine. The polypeptide is tRNA(Ile)-lysidine synthase (Haemophilus influenzae (strain 86-028NP)).